The chain runs to 200 residues: Large ribosomal subunit protein bL9 (200 aa).

It belongs to the bacterial ribosomal protein bL9 family.

Binds to the 23S rRNA. This is Large ribosomal subunit protein bL9 from Ruegeria pomeroyi (strain ATCC 700808 / DSM 15171 / DSS-3) (Silicibacter pomeroyi).